Here is a 404-residue protein sequence, read N- to C-terminus: Tryptophan synthase beta chain (404 aa).

An N6-(pyridoxal phosphate)lysine modification is found at K98.

The protein belongs to the TrpB family. As to quaternary structure, tetramer of two alpha and two beta chains. It depends on pyridoxal 5'-phosphate as a cofactor.

The catalysed reaction is (1S,2R)-1-C-(indol-3-yl)glycerol 3-phosphate + L-serine = D-glyceraldehyde 3-phosphate + L-tryptophan + H2O. The protein operates within amino-acid biosynthesis; L-tryptophan biosynthesis; L-tryptophan from chorismate: step 5/5. In terms of biological role, the beta subunit is responsible for the synthesis of L-tryptophan from indole and L-serine. The chain is Tryptophan synthase beta chain from Acidiphilium cryptum (strain JF-5).